Consider the following 213-residue polypeptide: Protein PAE0745 (213 aa).

The 194-residue stretch at glutamate 8–glutamate 201 folds into the AMMECR1 domain.

The polypeptide is Protein PAE0745 (Pyrobaculum aerophilum (strain ATCC 51768 / DSM 7523 / JCM 9630 / CIP 104966 / NBRC 100827 / IM2)).